The following is a 98-amino-acid chain: NADH-ubiquinone oxidoreductase chain 4L (98 aa).

A run of 3 helical transmembrane segments spans residues 1–21 (MPFI…GLLI), 29–49 (SLLC…LMTL), and 61–81 (IVLL…LVLI).

This sequence belongs to the complex I subunit 4L family. Core subunit of respiratory chain NADH dehydrogenase (Complex I) which is composed of 45 different subunits.

The protein localises to the mitochondrion inner membrane. It catalyses the reaction a ubiquinone + NADH + 5 H(+)(in) = a ubiquinol + NAD(+) + 4 H(+)(out). Its function is as follows. Core subunit of the mitochondrial membrane respiratory chain NADH dehydrogenase (Complex I) which catalyzes electron transfer from NADH through the respiratory chain, using ubiquinone as an electron acceptor. Part of the enzyme membrane arm which is embedded in the lipid bilayer and involved in proton translocation. In Aotus trivirgatus (Three-striped night monkey), this protein is NADH-ubiquinone oxidoreductase chain 4L (MT-ND4L).